Here is a 152-residue protein sequence, read N- to C-terminus: UPF0225 protein YchJ (152 aa).

Belongs to the UPF0225 family.

The sequence is that of UPF0225 protein YchJ from Salmonella gallinarum (strain 287/91 / NCTC 13346).